Consider the following 295-residue polypeptide: Large ribosomal subunit protein uL15m (295 aa).

Residues 1–20 (MAGTARGCGTSLDLLRSLPR) constitute a mitochondrion transit peptide. Residues 21–67 (VSLANLKPSPNSRKRERRPRDRRRGRKCGRGHKGERQRGTRPRLGFE) form a disordered region. Basic residues predominate over residues 32–51 (SRKRERRPRDRRRGRKCGRG).

Belongs to the universal ribosomal protein uL15 family. As to quaternary structure, component of the mitochondrial ribosome large subunit (39S) which comprises a 16S rRNA and about 50 distinct proteins.

Its subcellular location is the mitochondrion. The chain is Large ribosomal subunit protein uL15m (Mrpl15) from Mus musculus (Mouse).